A 167-amino-acid chain; its full sequence is Piercer of microtubule wall 1 protein (167 aa).

Positions 1–54 (MSEEKPQQSAEEPEPGEPKAKPAPEEPEPGEPKAKPAPEEPEPGEPKAKPAPEK) are disordered. Residues 16–54 (GEPKAKPAPEEPEPGEPKAKPAPEEPEPGEPKAKPAPEK) are compositionally biased toward basic and acidic residues.

This sequence belongs to the PIERCE1 family. In terms of assembly, microtubule inner protein component of sperm flagellar doublet microtubules. Interacts with CFAP53, ODAD1 and ODAD3; the interactions link the outer dynein arms docking complex (ODA-DC) to the internal microtubule inner proteins (MIP) in cilium axoneme. Expressed in brain, lung, kidney and testis.

Its subcellular location is the cytoplasm. It is found in the cytoskeleton. The protein resides in the cilium axoneme. It localises to the flagellum axoneme. In terms of biological role, microtubule inner protein involved in the attachment of outer dynein arms (ODAs) to dynein-decorated doublet microtubules (DMTs) in cilia axoneme. Functions at the initial step of left-right asymmetry specification of the visceral organs. In Mus musculus (Mouse), this protein is Piercer of microtubule wall 1 protein.